The primary structure comprises 573 residues: Probable D-xylulose kinase A (573 aa).

Residues His97, Arg168, Asp284, and Asn285 each contribute to the substrate site. Residues Trp366, 471–472, and Asn475 each bind ATP; that span reads GG.

Belongs to the FGGY kinase family.

The protein localises to the cytoplasm. The enzyme catalyses D-xylulose + ATP = D-xylulose 5-phosphate + ADP + H(+). Its function is as follows. Highly specific D-xylulose kinase which participates in the catabolism of xylose. Xylose is a major component of hemicelluloses such as xylan. Most fungi utilize D-xylose via three enzymatic reactions, xylose reductase (XR), xylitol dehydrogenase (XDH), and xylulokinase, to form xylulose 5-phosphate, which enters pentose phosphate pathway. This is Probable D-xylulose kinase A (xkiA) from Aspergillus clavatus (strain ATCC 1007 / CBS 513.65 / DSM 816 / NCTC 3887 / NRRL 1 / QM 1276 / 107).